We begin with the raw amino-acid sequence, 707 residues long: MDSQKNTNLALQALEVLAQYHNISINPEEIKHKFDIDGHGLNQTKWLLAAKSLGLKVRTANKTVDRLPFLHLPALAWRDDGEHFILLKIDQETDRYLIFDLIQKNPIVLDKNEFEERYQSKVILIASRASIVGNLAKFDFTWFIPAVIKYRKIFIETLIVSIFLQIFALITPLFFQVVMDKVLVHRGFSTLNVITVALAIVVLFEIILGGLRTYVFAHSTSRIDVELGARLFRHLLALPISYFEARRVGDTVARVRELDQIRNFLTGQALTSILDLLFSFIFFAVMWYYSPKLTLVVLGSLPCYVIWSVFISPILRRRLDDKFARNADNQSFLVESVTAINTIKAMAISPQMTNIWDKQLASYVAVSFKVTVLATIGQQGIQLIQKAVMVINLWLGAHLVISGDLSIGQLIAFNMLAGQIISPVIRLAQIWQDFQQVGISVTRLGDVLNSPTENNTASVSLPEIQGEISFRNIKFRYKPDSPMILNNINLDISQGEVIGIVGRSGSGKSTLTKLIQRFYIPEQGQVLIDGHDLALADPNWLRRQVGVVLQDNVLLNRSIRENIALTNPGMPMEKVIAAAKLAGAHDFISELREGYNTVVGEQGAGLSGGQRQRIAIARALVNNPRILIFDEATSALDYESENIIMHNMHKICQNRTVLIIAHRLSTVKNADRIIVMDKGEIIEQGKHQELLKDEKGLYSYLHQLQVN.

Positions 4 to 125 (QKNTNLALQA…ERYQSKVILI (122 aa)) constitute a Peptidase C39 domain. His-83 is a catalytic residue. The next 5 membrane-spanning stretches (helical) occupy residues 158-178 (LIVS…FQVV), 191-211 (LNVI…LGGL), 269-289 (ALTS…MWYY), 295-315 (LVVL…SPIL), and 387-407 (AVMV…DLSI). The ABC transmembrane type-1 domain maps to 158 to 436 (LIVSIFLQIF…LAQIWQDFQQ (279 aa)). The ABC transporter domain occupies 468–703 (ISFRNIKFRY…EKGLYSYLHQ (236 aa)). 502-509 (GRSGSGKS) provides a ligand contact to ATP.

It belongs to the ABC transporter superfamily. Protein-1 exporter (TC 3.A.1.109) family. Probably part of a complex composed of LtxB, LtxD and TdeA, which forms a single transport channel across the two membranes.

It localises to the cell inner membrane. It catalyses the reaction ATP + H2O + proteinSide 1 = ADP + phosphate + proteinSide 2.. In terms of biological role, involved in the export of the LtxA leukotoxin. The protein is Leukotoxin export ATP-binding protein LtxB of Aggregatibacter actinomycetemcomitans (Actinobacillus actinomycetemcomitans).